The sequence spans 239 residues: Uridylate kinase (239 aa).

Residue 10-13 coordinates ATP; it reads KLSG. Gly-53 serves as a coordination point for UMP. Positions 54 and 58 each coordinate ATP. UMP-binding positions include Asp-73 and 135 to 142; that span reads TGRPYFTT. Asn-163, Tyr-169, and Asp-172 together coordinate ATP.

Belongs to the UMP kinase family. Homohexamer.

It is found in the cytoplasm. The catalysed reaction is UMP + ATP = UDP + ADP. It participates in pyrimidine metabolism; CTP biosynthesis via de novo pathway; UDP from UMP (UMPK route): step 1/1. Its activity is regulated as follows. Inhibited by UTP. In terms of biological role, catalyzes the reversible phosphorylation of UMP to UDP. The sequence is that of Uridylate kinase from Mycoplasmopsis synoviae (strain 53) (Mycoplasma synoviae).